A 980-amino-acid polypeptide reads, in one-letter code: MRRAEAPSSAHPAGPIPDAGKGEGEEDEEKDGTRLGLSTTPRNCIPRRGISVLEKLVKTCPVWLQLGLGQAEAAKILQQEMAGMFLVCRDNNLKQLVLCVHFPSLKGSSAEVLEYPIKEEKAILYLEGSVLVFEDIFRLIAFYCVSRDLLPFTLRLPQAILEASSFLELETISNLGLGFWDSSLNSRGSAEPLRSPAPGTPASSSLRPTTHYANCSCEIELSVGNDRLWFVNPIFIEDCILPADPPPLPTGSYPPRPTPATPDATSPTSKGSPRRPPPPPPLPTVPPTGPARPLAPPVPPAGPLPNSPLTPTSHLAPHAPGPPGHSNQPPMTACESLPRPAVGLGPFGEEEMKPGTTPNPLHQAPPPPLPLKKALPAAPPRRRISERVSLESQNVGTSTDRDHSGISRTASLNLPPQSTVSSLGDRPPRTTEQSQDTEAKASHADSIPVPPGKAKQPPVPPPRKKRVSRQLASTLLSPLESPIQEASSEKQATGASWEGLSPVRQAGMQHLQVQSSSCPQSSPEFKGSQASLSDSLGVPASAADQDSYSTSSAEEELEFSSPNVKKKPSMILDKARHRLSFVSFASVFHAFLSSDRKLYKKVVELAQDKSSYFGSLVQDYKVYSLEMMARQTSSTEMLQEIRTMMTQLKSYLLQSTELKALVEPTLHSEEELEAIVESALYKCVLKPLKEAINSSLLEIHSRDGSLQQLKENQLVVLATTTTDLGVTTSVPEVAVMEKILQKLTSMHKAYSPGKKISILLKTCKLIYDSMALGNPGKPYGADDFLPVLMYVLARSNLTEMLLNVEYMMELMDPALQLGEGSYYLTTTYGALEHIKNYDKITVTRQLSVEVQDSIHRWERRRTLNKARASRSSVQDFICVSYLKPEQQSRTLASRADTAAQALCAQCAEKFEVSQPQDYRLFVLVDGRCFQLADEALPHRIKGYLLRSEPKRDFHFVYRPQDSGKDASSQPCIVVREPNFL.

Residues 1–40 (MRRAEAPSSAHPAGPIPDAGKGEGEEDEEKDGTRLGLSTT) are disordered. One can recognise an SH2 domain in the interval 63–158 (WLQLGLGQAE…LLPFTLRLPQ (96 aa)). The segment covering 247 to 260 (PLPTGSYPPRPTPA) has biased composition (pro residues). 2 disordered regions span residues 247-496 (PLPT…TGAS) and 509-560 (QHLQ…LEFS). The span at 261-271 (TPDATSPTSKG) shows a compositional bias: low complexity. The span at 274-308 (RRPPPPPPLPTVPPTGPARPLAPPVPPAGPLPNSP) shows a compositional bias: pro residues. Composition is skewed to polar residues over residues 406–422 (ISRTASLNLPPQSTVSS) and 484–494 (QEASSEKQATG). Residues 514-523 (QSSSCPQSSP) show a composition bias toward low complexity. The interval 584-729 (FASVFHAFLS…TTTDLGVTTS (146 aa)) is interaction with RAB5B. In terms of domain architecture, VPS9 spans 700–843 (HSRDGSLQQL…IKNYDKITVT (144 aa)). The Ras-associating domain maps to 865-962 (KARASRSSVQ…FHFVYRPQDS (98 aa)).

It belongs to the RIN (Ras interaction/interference) family. Interacts with CD2AP, RAB5B, RAB31 and BIN1.

The protein resides in the cytoplasm. The protein localises to the cytoplasmic vesicle. It localises to the early endosome. In terms of biological role, ras effector protein that functions as a guanine nucleotide exchange (GEF) for RAB5B and RAB31, by exchanging bound GDP for free GTP. Required for normal RAB31 function. The polypeptide is Ras and Rab interactor 3 (Rin3) (Mus musculus (Mouse)).